The sequence spans 413 residues: Probable aminotransferase sirI (413 aa).

K255 carries the N6-(pyridoxal phosphate)lysine modification.

It belongs to the class-I pyridoxal-phosphate-dependent aminotransferase family. Pyridoxal 5'-phosphate is required as a cofactor.

It participates in mycotoxin biosynthesis. Its function is as follows. Probable aminotransferase; part of the gene cluster that mediates the biosynthesis of sirodesmin PL, an epipolythiodioxopiperazine (ETP) characterized by a disulfide bridged cyclic dipeptide and that acts as a phytotoxin which is involved in the blackleg didease of canola. SirD catalyzes the O-prenylation of L-tyrosine (L-Tyr) in the presence of dimethylallyl diphosphate (DMAPP) to yield 4-O-dimethylallyl-L-Tyr, and therefore represents probably the first pathway-specific enzyme in the biosynthesis of sirodesmin PL. 4-O-dimethylallyl-L-Tyr, then undergoes condensation with L-Ser in a reaction catalyzed by the non-ribosomal peptide synthase sirP to form the diketopiperazine (DKP) backbone. Further bishydroxylation of the DKP performed by the cytochrome P450 monooxygenase sirC leads to the production of the intermediate phomamide. This step is essential to form the reactive thiol group required for toxicity of sirodesmin PL. The next steps of sirodesmin biosynthesis are not well understood yet, but some predictions could be made from intermediate compounds identification. Phomamide is converted into phomalizarine via oxidation, probably by sirT. Further oxidation, methylation (by sirM or sirN) and reduction steps convert phomalizarine to deacetyl sirodesmin. Finally, acetyltransferase sirH probably acetylates deacetyl sirodesmin to produce sirodesmin PL. This chain is Probable aminotransferase sirI, found in Leptosphaeria maculans (Blackleg fungus).